A 158-amino-acid polypeptide reads, in one-letter code: Cyclic pyranopterin monophosphate synthase (158 aa).

Residues 75–77 and 113–114 each bind substrate; these read LCH and ME. The active site involves Asp128.

The protein belongs to the MoaC family. In terms of assembly, homohexamer; trimer of dimers.

The enzyme catalyses (8S)-3',8-cyclo-7,8-dihydroguanosine 5'-triphosphate = cyclic pyranopterin phosphate + diphosphate. The protein operates within cofactor biosynthesis; molybdopterin biosynthesis. In terms of biological role, catalyzes the conversion of (8S)-3',8-cyclo-7,8-dihydroguanosine 5'-triphosphate to cyclic pyranopterin monophosphate (cPMP). This chain is Cyclic pyranopterin monophosphate synthase, found in Histophilus somni (strain 2336) (Haemophilus somnus).